The chain runs to 340 residues: L-threonine 3-dehydrogenase (340 aa).

Residue Cys-38 coordinates Zn(2+). Active-site charge relay system residues include Thr-40 and His-43. His-63, Glu-64, Cys-93, Cys-96, Cys-99, and Cys-107 together coordinate Zn(2+). NAD(+)-binding positions include Ile-175, Asp-195, Arg-200, Leu-262–Ile-264, and Ile-286–Tyr-287.

The protein belongs to the zinc-containing alcohol dehydrogenase family. As to quaternary structure, homotetramer. Requires Zn(2+) as cofactor.

It localises to the cytoplasm. The enzyme catalyses L-threonine + NAD(+) = (2S)-2-amino-3-oxobutanoate + NADH + H(+). Its pathway is amino-acid degradation; L-threonine degradation via oxydo-reductase pathway; glycine from L-threonine: step 1/2. Catalyzes the NAD(+)-dependent oxidation of L-threonine to 2-amino-3-ketobutyrate. The sequence is that of L-threonine 3-dehydrogenase from Legionella pneumophila subsp. pneumophila (strain Philadelphia 1 / ATCC 33152 / DSM 7513).